Reading from the N-terminus, the 913-residue chain is DNA mismatch repair protein MutS (913 aa).

The interval Asn-18 to Ser-50 is disordered. Basic and acidic residues predominate over residues Asn-19–Lys-42. Residue Gly-720 to Ser-727 participates in ATP binding.

It belongs to the DNA mismatch repair MutS family.

Functionally, this protein is involved in the repair of mismatches in DNA. It is possible that it carries out the mismatch recognition step. This protein has a weak ATPase activity. This is DNA mismatch repair protein MutS from Prochlorococcus marinus (strain MIT 9301).